Here is a 377-residue protein sequence, read N- to C-terminus: MEESEEPADAGQSLPPVYIYSPEYVSVCDSLAKVPKRASMVHSLIEAYALHKQMRIVKPKVASMEEMASFHTDAYLQHLQKVSEDGDDDHPDSIEYGLGYDCPATEGIFDYAAAVGGATITAAQCLIDGMCKVAINWSGGWHHAKKDEASGFCYLNDAVLGILRLRRKFDRILYVDLDLHHGDGVEDAFSFTSKVMTVSLHKFSPGFFPGTGDVSDVGLGKGRYYSVNVPIQDCIQDERYYHICESVLKEVYIAFNPKAVVLQLGADTIAGDPMCSFNMTPVGIGKCLKYILQWELATLILGGGGYNLANTARCWTYLTGVILGKTLSSEIPDHEFFTAYGPDYVLEITPSCRPDRNEPHRVQQILNYIKGNLKHVV.

The histone deacetylase stretch occupies residues 14–324 (LPPVYIYSPE…WTYLTGVILG (311 aa)). Phosphoserine is present on serine 39. Aspartate 101 is a binding site for substrate. Histidine 143 (proton acceptor) is an active-site residue. Glycine 151 lines the substrate pocket. A divalent metal cation is bound by residues aspartate 178, histidine 180, and aspartate 267. Substrate is bound at residue tyrosine 306.

The protein belongs to the histone deacetylase family. HD type 1 subfamily. As to quaternary structure, interacts with CBFA2T3. Interacts with phosphorylated SMG5/EST1B; this interaction protects SMG5 from ubiquitin-mediated degradation. Associates with alpha-SMA (smooth muscle alpha-actin). Requires a divalent metal cation as cofactor. Phosphorylated by PKA on serine 39. Phosphorylation reduces deacetylase activity observed preferentially on histones H3 and H4.

Its subcellular location is the nucleus. The protein localises to the chromosome. The protein resides in the cytoplasm. It catalyses the reaction N(6)-acetyl-L-lysyl-[histone] + H2O = L-lysyl-[histone] + acetate. The catalysed reaction is N(6)-acetyl-L-lysyl-[protein] + H2O = L-lysyl-[protein] + acetate. It carries out the reaction N(6)-(2E)-butenoyl-L-lysyl-[protein] + H2O = (2E)-2-butenoate + L-lysyl-[protein]. With respect to regulation, its activity is inhibited by trichostatin A (TSA) and butyrate, 2 well known histone deacetylase inhibitors. Histone deacetylase that catalyzes the deacetylation of lysine residues on the N-terminal part of the core histones (H2A, H2B, H3 and H4). Histone deacetylation gives a tag for epigenetic repression and plays an important role in transcriptional regulation, cell cycle progression and developmental events. Histone deacetylases act via the formation of large multiprotein complexes. Also involved in the deacetylation of cohesin complex protein SMC3 regulating release of cohesin complexes from chromatin. May play a role in smooth muscle cell contractility. In addition to protein deacetylase activity, also has protein-lysine deacylase activity: acts as a protein decrotonylase by mediating decrotonylation ((2E)-butenoyl) of histones. In Bos taurus (Bovine), this protein is Histone deacetylase 8 (HDAC8).